Here is a 327-residue protein sequence, read N- to C-terminus: Polyprenyl transferase esdpC (327 aa).

Transmembrane regions (helical) follow at residues 35–54 (YNPLLATFSGVWATLLAGAS), 73–93 (LLVFVGGYIFCGAGMVWNDWI), 118–138 (EALIWMMAQYIASWYLIAYTL), 140–160 (GHNVLEAMIPVTISTILYPFG), 171–191 (YPQYFLGFTLGYPSVIGWLAI), 202–222 (IMESFALGTTVFTWVLYLNTA), 239–259 (VYFLAGSYIHYFLVFLAALVL), and 307–327 (ENFALGVWTVFACAVELLLKS).

This sequence belongs to the UbiA prenyltransferase family. It depends on Mg(2+) as a cofactor.

The protein resides in the membrane. Its pathway is secondary metabolite biosynthesis; terpenoid biosynthesis. Olyprenyl transferase; part of the cluster that mediates the biosynthesis of shearones, diterpenoid pyrones (DPs) which are structurally diverse meroterpenoids consisting of a diterpene linked by a pyrone, and which may exhibit a range of bioactivities. Within the pathway, esdpC takes part to the biosynthesis of the molecular scaffold by catalyzing the C-3 geranylgeranylation reaction of the alpha-pyrone produced by esdpA. The molecular scaffold is commonly biosynthesized by a series of enzymes including the non-reducing polyketide synthase (NR-PKS) esdpA that generates an alpha-pyrone; the prenyltransferase esdpC that attaches a geranylgeranyl pyrophosphate (GGPP) produced by the GGPP synthase (GGPPS) esdpD onto the pyrone unit; the FAD-dependent monooxygenase esdpE that converts an olefin on the diterpene unit into an epoxide; and the terpene cyclase esdpB that catalyzes the cyclization reactions to give the molecular backbone shearone A. In the modification steps, esdpF oxidizes the hydroxy group to a ketone at C-3 and esdpG then attaches hydroxy groups at both C-11 and C-12. After that, esdpI hydroxylates at C-20 and esdpH hydroxylates at C-6'. The ether bridge is generated by nucleophilic attack of the hydroxy group at C-20 to the carbonyl carbon at C-3. EsdpH can also functions prior to esdpI. The different combinations of these modification enzymes lead to the production of diverse shearone derivatives, shearone I being the end product of the pathway. The alpha-ketoglutarate-dependent dioxygenase esdpJ seems not to be involved in this pathway. The chain is Polyprenyl transferase esdpC from Penicillium shearii (Eupenicillium shearii).